The primary structure comprises 350 residues: TATA box-binding protein-like 2 (350 aa).

Residues 82–150 (ENRDQTVTGN…QPSPETPNSN (69 aa)) form a disordered region. Over residues 94–116 (ASEESCRTRDRQSQLQLPDEHGS) the composition is skewed to basic and acidic residues. Composition is skewed to polar residues over residues 118–128 (LNLNSNSSPDP) and 139–150 (SNQPSPETPNSN).

Belongs to the TBP family. In terms of assembly, interacts with TAF3. Expressed in myotubes and myofibers (at protein level). Expressed in a wide variety of tissues with highest levels in heart, lung, liver, uterus and placenta and especially the gonads. Expression is higher in the ovary than the testis, and within the ovary expression is localized to the oocytes.

Its subcellular location is the cytoplasm. It is found in the nucleus. Its function is as follows. Transcription factor required in complex with TAF3 for the differentiation of myoblasts into myocytes. The complex replaces TFIID at specific promoters at an early stage in the differentiation process. The sequence is that of TATA box-binding protein-like 2 from Mus musculus (Mouse).